The primary structure comprises 574 residues: Uric acid-xanthine permease (574 aa).

Residues 1–20 (MDNSIHSTDGPDSVIPNSNP) form a disordered region. Transmembrane regions (helical) follow at residues 77 to 97 (LLAFILGLQHALAMLAGVVTP), 111 to 131 (LQQYLVSTSLIVCGLLSMVQI), 141 to 161 (YYIGSGVLSVMGVSFSIISVA), 188 to 209 (AYGALIGTSACCALVEILLAFV), 217 to 237 (IFPPIVTGPTVMLIGISLIGT), 264 to 284 (LPWGSPEFIGLGFLVFVSIIL), 296 to 315 (CSVVIGLLVGCIVAAACGYF), 338 to 361 (VYGPMVLPIIAVFIICACECIGDV), 427 to 447 (CCLILIVAGIFAKFAAAIVAI), 451 to 471 (VMGGMKTFLFASVVISGQAIV), 482 to 502 (FILTASMALGYGATLVPTWFG), and 522 to 542 (LVLETGFAVTAFVAMLLNAIM). The tract at residues 555-574 (MPVSAHDNRDGEAEYQSKQA) is disordered. Residue lysine 572 forms a Glycyl lysine isopeptide (Lys-Gly) (interchain with G-Cter in ubiquitin) linkage.

The protein belongs to the nucleobase:cation symporter-2 (NCS2) (TC 2.A.40) family. In terms of processing, ubiquitinated by hulA. Ubiquitination leads to internalization, sorting into the endosomal pathway to the vacuolar lumen where uapA is eventually degraded.

Its subcellular location is the cell membrane. Functionally, uric acid-xanthine transporter. The polypeptide is Uric acid-xanthine permease (uapA) (Emericella nidulans (strain FGSC A4 / ATCC 38163 / CBS 112.46 / NRRL 194 / M139) (Aspergillus nidulans)).